The chain runs to 805 residues: Endonuclease MutS2 (805 aa).

344–351 (GPNGGGKT) lines the ATP pocket. Residues 705–724 (RSRSEKLQAASEARPSAPPG) are disordered. Positions 729–804 (LDVRGLRVEE…GDAVTVVSLR (76 aa)) constitute a Smr domain.

The protein belongs to the DNA mismatch repair MutS family. MutS2 subfamily. Homodimer. Binds to stalled ribosomes, contacting rRNA.

Endonuclease that is involved in the suppression of homologous recombination and thus may have a key role in the control of bacterial genetic diversity. Functionally, acts as a ribosome collision sensor, splitting the ribosome into its 2 subunits. Detects stalled/collided 70S ribosomes which it binds and splits by an ATP-hydrolysis driven conformational change. Acts upstream of the ribosome quality control system (RQC), a ribosome-associated complex that mediates the extraction of incompletely synthesized nascent chains from stalled ribosomes and their subsequent degradation. Probably generates substrates for RQC. The sequence is that of Endonuclease MutS2 from Anaeromyxobacter sp. (strain Fw109-5).